A 273-amino-acid chain; its full sequence is Dermonecrotic toxin LhSicTox-alphaIA2bii (273 aa).

His-5 is an active-site residue. Mg(2+)-binding residues include Glu-25 and Asp-27. His-41 (nucleophile) is an active-site residue. 2 disulfides stabilise this stretch: Cys-45/Cys-51 and Cys-47/Cys-190. Position 85 (Asp-85) interacts with Mg(2+).

Belongs to the arthropod phospholipase D family. Class II subfamily. The cofactor is Mg(2+). Expressed by the venom gland.

It localises to the secreted. The catalysed reaction is an N-(acyl)-sphingosylphosphocholine = an N-(acyl)-sphingosyl-1,3-cyclic phosphate + choline. The enzyme catalyses an N-(acyl)-sphingosylphosphoethanolamine = an N-(acyl)-sphingosyl-1,3-cyclic phosphate + ethanolamine. It catalyses the reaction a 1-acyl-sn-glycero-3-phosphocholine = a 1-acyl-sn-glycero-2,3-cyclic phosphate + choline. It carries out the reaction a 1-acyl-sn-glycero-3-phosphoethanolamine = a 1-acyl-sn-glycero-2,3-cyclic phosphate + ethanolamine. Functionally, dermonecrotic toxins cleave the phosphodiester linkage between the phosphate and headgroup of certain phospholipids (sphingolipid and lysolipid substrates), forming an alcohol (often choline) and a cyclic phosphate. This toxin acts on sphingomyelin (SM). It may also act on ceramide phosphoethanolamine (CPE), lysophosphatidylcholine (LPC) and lysophosphatidylethanolamine (LPE), but not on lysophosphatidylserine (LPS), and lysophosphatidylglycerol (LPG). It acts by transphosphatidylation, releasing exclusively cyclic phosphate products as second products. Induces dermonecrosis, hemolysis, increased vascular permeability, edema, inflammatory response, and platelet aggregation. This is Dermonecrotic toxin LhSicTox-alphaIA2bii from Loxosceles hirsuta (Recluse spider).